A 467-amino-acid chain; its full sequence is 3-isopropylmalate dehydratase large subunit (467 aa).

The [4Fe-4S] cluster site is built by Cys347, Cys407, and Cys410.

The protein belongs to the aconitase/IPM isomerase family. LeuC type 1 subfamily. Heterodimer of LeuC and LeuD. [4Fe-4S] cluster serves as cofactor.

The catalysed reaction is (2R,3S)-3-isopropylmalate = (2S)-2-isopropylmalate. The protein operates within amino-acid biosynthesis; L-leucine biosynthesis; L-leucine from 3-methyl-2-oxobutanoate: step 2/4. Catalyzes the isomerization between 2-isopropylmalate and 3-isopropylmalate, via the formation of 2-isopropylmaleate. In Prochlorococcus marinus (strain MIT 9301), this protein is 3-isopropylmalate dehydratase large subunit.